We begin with the raw amino-acid sequence, 122 residues long: Large ribosomal subunit protein uL14 (122 aa).

This sequence belongs to the universal ribosomal protein uL14 family. Part of the 50S ribosomal subunit. Forms a cluster with proteins L3 and L19. In the 70S ribosome, L14 and L19 interact and together make contacts with the 16S rRNA in bridges B5 and B8.

In terms of biological role, binds to 23S rRNA. Forms part of two intersubunit bridges in the 70S ribosome. The chain is Large ribosomal subunit protein uL14 from Clostridium botulinum (strain Alaska E43 / Type E3).